Here is a 432-residue protein sequence, read N- to C-terminus: 5'-deoxyadenosine deaminase (432 aa).

The Zn(2+) site is built by His63 and His65. Residues Glu92 and His184 each contribute to the substrate site. Position 211 (His211) interacts with Zn(2+). The substrate site is built by Glu214 and Asp299. Position 299 (Asp299) interacts with Zn(2+).

It belongs to the metallo-dependent hydrolases superfamily. MTA/SAH deaminase family. In terms of assembly, homotetramer. Requires Zn(2+) as cofactor.

The enzyme catalyses 5'-deoxyadenosine + H2O + H(+) = 5'-deoxyinosine + NH4(+). It catalyses the reaction S-adenosyl-L-homocysteine + H2O + H(+) = S-inosyl-L-homocysteine + NH4(+). It carries out the reaction S-methyl-5'-thioadenosine + H2O + H(+) = S-methyl-5'-thioinosine + NH4(+). The catalysed reaction is adenosine + H2O + H(+) = inosine + NH4(+). The protein operates within amino-acid biosynthesis; S-adenosyl-L-methionine biosynthesis. In terms of biological role, catalyzes the deamination of three SAM-derived enzymatic products, namely 5'-deoxyadenosine, S-adenosyl-L-homocysteine, and 5'-methylthioadenosine, to produce the inosine analogs. Can also deaminate adenosine. The preferred substrate for this enzyme is 5'-deoxyadenosine, but all these substrates are efficiently deaminated. Likely functions in a S-adenosyl-L-methionine (SAM) recycling pathway from S-adenosyl-L-homocysteine (SAH) produced from SAM-dependent methylation reactions. May also be involved in the recycling of 5'-deoxyadenosine, whereupon the 5'-deoxyribose moiety of 5'-deoxyinosine is further metabolized to deoxyhexoses used for the biosynthesis of aromatic amino acids in methanogens. This is 5'-deoxyadenosine deaminase from Methanosarcina barkeri (strain Fusaro / DSM 804).